A 273-amino-acid chain; its full sequence is Eukaryotic translation initiation factor 3 subunit J (273 aa).

Positions 1 to 158 (MPTKKWEDEE…DPSDPSKTVE (158 aa)) are disordered. The span at 34 to 54 (DEEANDSDVLDSWDAAEDSEV) shows a compositional bias: acidic residues. Positions 50–97 (EDSEVEREKAKKAAEAKAKAEAEAKANKKTKAARINEHKQRRKEAEES) form a coiled coil. The segment covering 55–75 (EREKAKKAAEAKAKAEAEAKA) has biased composition (basic and acidic residues). Residues 95–104 (EESDESDDET) are compositionally biased toward acidic residues. The segment covering 105 to 126 (ESQRRERLRRTEKEADLAHAED) has biased composition (basic and acidic residues).

It belongs to the eIF-3 subunit J family. As to quaternary structure, component of the eukaryotic translation initiation factor 3 (eIF-3) complex.

It is found in the cytoplasm. Component of the eukaryotic translation initiation factor 3 (eIF-3) complex, which is involved in protein synthesis of a specialized repertoire of mRNAs and, together with other initiation factors, stimulates binding of mRNA and methionyl-tRNAi to the 40S ribosome. The eIF-3 complex specifically targets and initiates translation of a subset of mRNAs involved in cell proliferation. This chain is Eukaryotic translation initiation factor 3 subunit J, found in Pyricularia oryzae (strain 70-15 / ATCC MYA-4617 / FGSC 8958) (Rice blast fungus).